Here is a 374-residue protein sequence, read N- to C-terminus: Palmitoyltransferase PFA5 (374 aa).

Residues 1 to 13 (MALSWNIRIRRRS) lie on the Cytoplasmic side of the membrane. A helical membrane pass occupies residues 14–34 (WFRFILPIIVLGLLCYGTWAY). At 35-55 (CHKLCYEQVDKRLRQKSVSVG) the chain is on the lumenal side. The chain crosses the membrane as a helical span at residues 56–76 (LICAVCFLDVVVIFIWLQIVI). The Cytoplasmic segment spans residues 77 to 173 (LVGPGTQPHV…TVIGRDNYRL (97 aa)). Positions 129-179 (IWCSECQSLKMERTHHSSELGHCIPRFDHYCMWIGTVIGRDNYRLFVQFAA) constitute a DHHC domain. The chain crosses the membrane as a helical span at residues 174–194 (FVQFAAYFSTLLLIMWVSICV). The Lumenal portion of the chain corresponds to 195 to 217 (YIRIITQHNHNYSPNLNANIIST). Residues 218 to 238 (LVFAILGWLLTASLLASSIFY) traverse the membrane as a helical segment. Residues 239–374 (MSQNKTSLEA…ASGDDSDPAY (136 aa)) lie on the Cytoplasmic side of the membrane.

It belongs to the DHHC palmitoyltransferase family. PFA5 subfamily. Post-translationally, autopalmitoylated.

It localises to the membrane. It carries out the reaction L-cysteinyl-[protein] + hexadecanoyl-CoA = S-hexadecanoyl-L-cysteinyl-[protein] + CoA. This chain is Palmitoyltransferase PFA5 (PFA5), found in Saccharomyces cerevisiae (strain ATCC 204508 / S288c) (Baker's yeast).